The chain runs to 426 residues: uncharacterized protein (426 aa).

Residues 23–42 form a disordered region; that stretch reads ENPRPTNNPSTSHPSDSYST. Over residues 26–42 the composition is skewed to polar residues; sequence RPTNNPSTSHPSDSYST.

The protein belongs to the serpin family.

This is an uncharacterized protein from Thermococcus kodakarensis (strain ATCC BAA-918 / JCM 12380 / KOD1) (Pyrococcus kodakaraensis (strain KOD1)).